The following is a 96-amino-acid chain: Iron-sulfur cluster assembly protein CyaY (96 aa).

It belongs to the frataxin family.

In terms of biological role, involved in iron-sulfur (Fe-S) cluster assembly. May act as a regulator of Fe-S biogenesis. The chain is Iron-sulfur cluster assembly protein CyaY from Rickettsia bellii (strain RML369-C).